We begin with the raw amino-acid sequence, 441 residues long: uncharacterized protein (441 aa).

Helical transmembrane passes span 21 to 41, 51 to 71, 94 to 114, 118 to 138, 150 to 170, 195 to 215, 239 to 259, 260 to 280, 291 to 311, 334 to 354, 363 to 383, and 419 to 439; these read VVVALTFSAIVGGLVAGMSLG, LGGGATIALSYAMLGTFAVAI, AASTTGLKYAVLVALVLVTMS, VIPVHIAFIPILIPPLLGVFA, VLTFGLITPYMVLPVGFGGIF, AMLLPGAGMIFGLLLAIFVSY, QHILVAALGIIAALGVQLYTG, SMIIGALAGFMVFTFGGVIAW, VHMMAMIGFIMIAAAGFAAVM, LAALLMLVVGLLVTMGIGSSF, IYVPLSLAFGFSPMATIALVG, and VVPTFIHYNIPLIIFGWIAAM.

Its subcellular location is the cell membrane. This is an uncharacterized protein from Vibrio parahaemolyticus serotype O3:K6 (strain RIMD 2210633).